The chain runs to 454 residues: Toluate 1,2-dioxygenase subunit alpha (454 aa).

A Rieske domain is found at Ile51–Leu148. Positions 92, 94, 112, and 115 each coordinate [2Fe-2S] cluster. Fe cation is bound by residues His221 and His226.

Belongs to the bacterial ring-hydroxylating dioxygenase alpha subunit family. As to quaternary structure, this dioxygenase system consists of three proteins: the two subunits of the hydroxylase component (XylX and XylY), and an electron transfer component (XylZ). It depends on [2Fe-2S] cluster as a cofactor. The cofactor is Fe cation.

It participates in xenobiotic degradation; toluene degradation. This is Toluate 1,2-dioxygenase subunit alpha (xylX) from Pseudomonas putida (Arthrobacter siderocapsulatus).